The sequence spans 618 residues: Leucine aminopeptidase 2 (618 aa).

A peptide is bound by residues 140-142 (QCQ) and 272-277 (PYGGME). Zn(2+) is bound at residue histidine 301. The active-site Proton acceptor is the glutamate 302. Positions 305 and 324 each coordinate Zn(2+). Catalysis depends on tyrosine 389, which acts as the Proton donor.

The protein belongs to the peptidase M1 family. Zn(2+) serves as cofactor.

The protein localises to the cytoplasm. The protein resides in the nucleus. It catalyses the reaction an epoxide + H2O = an ethanediol. In terms of biological role, aminopeptidase that preferentially cleaves di- and tripeptides. Also has low epoxide hydrolase activity (in vitro). Can hydrolyze the epoxide leukotriene LTA(4) but it forms preferentially 5,6-dihydroxy-7,9,11,14-eicosatetraenoic acid rather than the cytokine leukotriene B(4) as the product compared to the homologous mammalian enzyme (in vitro). The sequence is that of Leucine aminopeptidase 2 from Emericella nidulans (strain FGSC A4 / ATCC 38163 / CBS 112.46 / NRRL 194 / M139) (Aspergillus nidulans).